Consider the following 117-residue polypeptide: Large ribosomal subunit protein bL20 (117 aa).

Belongs to the bacterial ribosomal protein bL20 family.

Binds directly to 23S ribosomal RNA and is necessary for the in vitro assembly process of the 50S ribosomal subunit. It is not involved in the protein synthesizing functions of that subunit. In Pelotomaculum thermopropionicum (strain DSM 13744 / JCM 10971 / SI), this protein is Large ribosomal subunit protein bL20.